The following is a 258-amino-acid chain: (S)-hydroxynitrile lyase (258 aa).

The AB hydrolase-1 domain occupies 5-242; sequence HFVLIHTICH…GGDHKLQLTK (238 aa). 2-hydroxy-2-methylpropanenitrile is bound by residues Thr11 and Ser80. 3 residues coordinate acetone: Thr11, Ser80, and Cys81. The Proton donor/acceptor role is filled by Ser80. Catalysis depends on His236, which acts as the Proton donor/acceptor.

The protein belongs to the AB hydrolase superfamily. Hydroxynitrile lyase family. As to quaternary structure, homotetramer.

The enzyme catalyses a monosubstituted aliphatic (S)-hydroxynitrile = an aldehyde + hydrogen cyanide. It catalyses the reaction a disubstituted aliphatic (S)-hydroxynitrile = a ketone + hydrogen cyanide. It carries out the reaction an aromatic (S)-hydroxynitrile = an aromatic aldehyde + hydrogen cyanide. The catalysed reaction is 2-hydroxy-2-methylpropanenitrile = acetone + hydrogen cyanide. The enzyme catalyses butan-2-one + hydrogen cyanide = 2-hydroxy-2-methylbutanenitrile. It catalyses the reaction pentan-2-one + hydrogen cyanide = (2S)-2-hydroxy-2-methylpentanenitrile. It carries out the reaction hexan-2-one + hydrogen cyanide = (2S)-2-hydroxy-2-methylhexanenitrile. The catalysed reaction is heptan-2-one + hydrogen cyanide = (2S)-2-hydroxy-2-methylheptanenitrile. The enzyme catalyses 4-methylpentan-2-one + hydrogen cyanide = (2S)-2-hydroxy-2,4-dimethylpentanenitrile. It catalyses the reaction 3,3-dimethylbutan-2-one + hydrogen cyanide = (2S)-2-hydroxy-2-methyl-3,3-dimethylbutanenitrile. It carries out the reaction acetophenone + hydrogen cyanide = (2S)-2-hydroxy-2-phenylpropanenitrile. The catalysed reaction is propanal + hydrogen cyanide = (2S)-2-hydroxybutanenitrile. The enzyme catalyses pentanal + hydrogen cyanide = (2S)-2-hydroxyhexanenitrile. It catalyses the reaction 2-methylpropanal + hydrogen cyanide = (2S)-2-hydroxy-3-methylbutanenitrile. It carries out the reaction 2,2-dimethylpropanal + hydrogen cyanide = (2S)-2-hydroxy-3,3-dimethylbutanenitrile. The catalysed reaction is acrolein + hydrogen cyanide = (2S)-2-hydroxybut-3-enenitrile. The enzyme catalyses (2E)-but-2-enal + hydrogen cyanide = (2S,3E)-2-hydroxypent-3-enenitrile. It catalyses the reaction (E)-hex-2-enal + hydrogen cyanide = (2S,3E)-2-hydroxyhept-3-enenitrile. It carries out the reaction cyclohexanecarbaldehyde + hydrogen cyanide = (2S)-2-cyclohexyl-2-hydroxyacetonitrile. The catalysed reaction is benzaldehyde + hydrogen cyanide = (S)-mandelonitrile. The enzyme catalyses 4-methoxybenzaldehyde + hydrogen cyanide = (2S)-2-hydroxy-2-(4-methoxyphenyl)acetonitrile. It catalyses the reaction piperonal + hydrogen cyanide = (2S)-2-(2H-1,3-benzodioxol-5-yl)-2-hydroxyacetonitrile. It carries out the reaction formylthiophene + hydrogen cyanide = (2R)-2-hydroxy-2-(thiophen-2-yl)acetonitrile. The catalysed reaction is 3-formylthiophene + hydrogen cyanide = (2S)-2-hydroxy-2-(thiophen-3-yl)acetonitrile. The enzyme catalyses furan-3-carbaldehyde + hydrogen cyanide = (2S)-2-(furan-3-yl)-2-hydroxyacetonitrile. Involved in cyanogenesis, the release of HCN from cyanogenic glycosides in injured tissues; the release of toxic HCN is believed to play a central role in the defense mechanism of plants against herbivores and microbial attack. Decomposes a variety of cyanohydrins (alpha-hydroxynitriles) into HCN and the corresponding aldehydes or ketones; two natural substrates are 2-hydroxy-2-methylpropanenitrile (acetone cyanohydrin) and 2-hydroxy-2-methylbutanenitrile (2-butanone cyanohydrin), but in vitro can also act on 2-hydroxy-2-methylpentanenitrile (2-pentanone cyanohydrin) and mandelonitrile. Is also able to catalyze the reverse reaction in vitro, leading to the stereospecific synthesis of aliphatic, aromatic, and heterocyclic cyanohydrins, important intermediates in the production of various agrochemicals or pharmaceuticals. This chain is (S)-hydroxynitrile lyase, found in Manihot esculenta (Cassava).